The primary structure comprises 406 residues: Zinc finger protein CONSTANS-LIKE 6 (406 aa).

Positions 17, 20, 40, and 45 each coordinate Zn(2+). Residues 17–59 form a B box-type; atypical zinc finger; the sequence is CDSCVKRRARWYCAADDAFLCHACDGSVHSANPLARRHERVRL. The segment at 63 to 95 is disordered; it reads SAGKYRHASPPHQATWHQGFTRKARTPRGGKKS. The segment covering 82-95 has biased composition (basic residues); that stretch reads FTRKARTPRGGKKS. The region spanning 357-399 is the CCT domain; that stretch reads REARVSRYREKRRTRLFSKKIRYEVRKLNAEKRPRMKGRFVKR.

The protein belongs to the CONSTANS family.

It is found in the nucleus. The protein is Zinc finger protein CONSTANS-LIKE 6 (COL6) of Arabidopsis thaliana (Mouse-ear cress).